A 209-amino-acid chain; its full sequence is Large ribosomal subunit protein uL3 (209 aa).

The segment at 122 to 151 is disordered; the sequence is AIKRHGQSRGPMSHGSRYHRRPGSMGPVDP.

Belongs to the universal ribosomal protein uL3 family. In terms of assembly, part of the 50S ribosomal subunit. Forms a cluster with proteins L14 and L19.

Functionally, one of the primary rRNA binding proteins, it binds directly near the 3'-end of the 23S rRNA, where it nucleates assembly of the 50S subunit. The protein is Large ribosomal subunit protein uL3 of Bacillus velezensis (strain DSM 23117 / BGSC 10A6 / LMG 26770 / FZB42) (Bacillus amyloliquefaciens subsp. plantarum).